Reading from the N-terminus, the 341-residue chain is 5-formaminoimidazole-4-carboxamide-1-(beta)-D-ribofuranosyl 5'-monophosphate synthetase (341 aa).

H27 and S92 together coordinate 5-amino-1-(5-phospho-beta-D-ribosyl)imidazole-4-carboxamide. The ATP-grasp domain occupies 113-328; the sequence is RELLRWEADQ…MGERIAHEIK (216 aa). ATP contacts are provided by residues 143–195 and E217; that span reads AEEV…VPAY. Position 237 (N237) interacts with 5-amino-1-(5-phospho-beta-D-ribosyl)imidazole-4-carboxamide. Residues E276 and E289 each coordinate Mg(2+).

It belongs to the phosphohexose mutase family. Mg(2+) is required as a cofactor. Requires Mn(2+) as cofactor.

It catalyses the reaction 5-amino-1-(5-phospho-beta-D-ribosyl)imidazole-4-carboxamide + formate + ATP = 5-formamido-1-(5-phospho-D-ribosyl)imidazole-4-carboxamide + ADP + phosphate. It participates in purine metabolism; IMP biosynthesis via de novo pathway; 5-formamido-1-(5-phospho-D-ribosyl)imidazole-4-carboxamide from 5-amino-1-(5-phospho-D-ribosyl)imidazole-4-carboxamide (formate route): step 1/1. Functionally, catalyzes the ATP- and formate-dependent formylation of 5-aminoimidazole-4-carboxamide-1-beta-d-ribofuranosyl 5'-monophosphate (AICAR) to 5-formaminoimidazole-4-carboxamide-1-beta-d-ribofuranosyl 5'-monophosphate (FAICAR) in the absence of folates. The sequence is that of 5-formaminoimidazole-4-carboxamide-1-(beta)-D-ribofuranosyl 5'-monophosphate synthetase from Pyrobaculum aerophilum (strain ATCC 51768 / DSM 7523 / JCM 9630 / CIP 104966 / NBRC 100827 / IM2).